The primary structure comprises 405 residues: 4-hydroxy-3-methylbut-2-en-1-yl diphosphate synthase (flavodoxin) (405 aa).

Positions 297, 300, 343, and 350 each coordinate [4Fe-4S] cluster.

Belongs to the IspG family. Requires [4Fe-4S] cluster as cofactor.

The catalysed reaction is (2E)-4-hydroxy-3-methylbut-2-enyl diphosphate + oxidized [flavodoxin] + H2O + 2 H(+) = 2-C-methyl-D-erythritol 2,4-cyclic diphosphate + reduced [flavodoxin]. The protein operates within isoprenoid biosynthesis; isopentenyl diphosphate biosynthesis via DXP pathway; isopentenyl diphosphate from 1-deoxy-D-xylulose 5-phosphate: step 5/6. Converts 2C-methyl-D-erythritol 2,4-cyclodiphosphate (ME-2,4cPP) into 1-hydroxy-2-methyl-2-(E)-butenyl 4-diphosphate. This is 4-hydroxy-3-methylbut-2-en-1-yl diphosphate synthase (flavodoxin) from Francisella tularensis subsp. tularensis (strain FSC 198).